The primary structure comprises 916 residues: RNA-directed DNA polymerase from mobile element jockey (916 aa).

A Reverse transcriptase domain is found at 483–757 (SILRVGYFPK…HEYKYLGVIL (275 aa)). Residues 890–916 (RSASPRSRVRRRLKRHHPQDLLDRALT) are disordered. A compositionally biased stretch (basic residues) spans 896 to 906 (SRVRRRLKRHH). Residues 907–916 (PQDLLDRALT) are compositionally biased toward basic and acidic residues.

The cofactor is Mg(2+). Requires Mn(2+) as cofactor.

It catalyses the reaction DNA(n) + a 2'-deoxyribonucleoside 5'-triphosphate = DNA(n+1) + diphosphate. Inactivated by sulphydryl reagent. This Drosophila funebris (Fruit fly) protein is RNA-directed DNA polymerase from mobile element jockey (jockey\pol).